Here is a 185-residue protein sequence, read N- to C-terminus: Ribosome-recycling factor (185 aa).

Positions 143–163 (EKEKLISEDDNKKGMDDIQKE) are disordered.

Belongs to the RRF family.

The protein resides in the cytoplasm. In terms of biological role, responsible for the release of ribosomes from messenger RNA at the termination of protein biosynthesis. May increase the efficiency of translation by recycling ribosomes from one round of translation to another. This chain is Ribosome-recycling factor, found in Syntrophomonas wolfei subsp. wolfei (strain DSM 2245B / Goettingen).